We begin with the raw amino-acid sequence, 317 residues long: L-lactate dehydrogenase 1 (317 aa).

NAD(+) contacts are provided by residues Val17, Asp38, Lys43, Tyr69, and 83–84 (GA). The substrate site is built by Gln86 and Arg92. NAD(+) is bound by residues Ser105, 122–124 (ATN), and Ser147. Substrate is bound at residue 124-127 (NPVD). 152-155 (DSAR) lines the substrate pocket. Residue His179 is the Proton acceptor of the active site. Tyr223 is modified (phosphotyrosine). Thr232 is a substrate binding site.

This sequence belongs to the LDH/MDH superfamily. LDH family. In terms of assembly, homotetramer.

The protein localises to the cytoplasm. The enzyme catalyses (S)-lactate + NAD(+) = pyruvate + NADH + H(+). The protein operates within fermentation; pyruvate fermentation to lactate; (S)-lactate from pyruvate: step 1/1. In terms of biological role, catalyzes the conversion of lactate to pyruvate (Potential). Appears to be the primary factor that allows S.aureus growth during nitrosative stress in both aerobically and anaerobically cultured cells. This is L-lactate dehydrogenase 1 from Staphylococcus aureus (strain USA300).